The following is a 157-amino-acid chain: Urease accessory protein UreE (157 aa).

This sequence belongs to the UreE family.

Its subcellular location is the cytoplasm. Involved in urease metallocenter assembly. Binds nickel. Probably functions as a nickel donor during metallocenter assembly. This is Urease accessory protein UreE from Corynebacterium glutamicum (strain ATCC 13032 / DSM 20300 / JCM 1318 / BCRC 11384 / CCUG 27702 / LMG 3730 / NBRC 12168 / NCIMB 10025 / NRRL B-2784 / 534).